A 229-amino-acid polypeptide reads, in one-letter code: Large ribosomal subunit protein uL1c (229 aa).

The protein belongs to the universal ribosomal protein uL1 family. In terms of assembly, part of the 50S ribosomal subunit.

The protein resides in the plastid. It is found in the chloroplast. In terms of biological role, binds directly to 23S rRNA. Might be involved in E site tRNA release (Potential). In Porphyra purpurea (Red seaweed), this protein is Large ribosomal subunit protein uL1c (rpl1).